Consider the following 163-residue polypeptide: Large ribosomal subunit protein uL22c (163 aa).

The protein belongs to the universal ribosomal protein uL22 family. In terms of assembly, part of the 50S ribosomal subunit.

The protein localises to the plastid. Its subcellular location is the chloroplast. Functionally, this protein binds specifically to 23S rRNA. In terms of biological role, the globular domain of the protein is located near the polypeptide exit tunnel on the outside of the subunit, while an extended beta-hairpin is found that lines the wall of the exit tunnel in the center of the 70S ribosome. This is Large ribosomal subunit protein uL22c (rpl22) from Lobularia maritima (Sweet alyssum).